Reading from the N-terminus, the 201-residue chain is 3-isopropylmalate dehydratase small subunit 1 (201 aa).

Belongs to the LeuD family. LeuD type 1 subfamily. As to quaternary structure, heterodimer of LeuC and LeuD.

It carries out the reaction (2R,3S)-3-isopropylmalate = (2S)-2-isopropylmalate. Its pathway is amino-acid biosynthesis; L-leucine biosynthesis; L-leucine from 3-methyl-2-oxobutanoate: step 2/4. Functionally, catalyzes the isomerization between 2-isopropylmalate and 3-isopropylmalate, via the formation of 2-isopropylmaleate. The protein is 3-isopropylmalate dehydratase small subunit 1 of Salmonella typhimurium (strain LT2 / SGSC1412 / ATCC 700720).